Reading from the N-terminus, the 312-residue chain is DNA-directed RNA polymerase subunit alpha (312 aa).

The alpha N-terminal domain (alpha-NTD) stretch occupies residues 1–229 (MLQYQIERID…ELFQPLATVT (229 aa)). The tract at residues 240–312 (PSPEAQIPLE…ISIPQSRTSV (73 aa)) is alpha C-terminal domain (alpha-CTD).

This sequence belongs to the RNA polymerase alpha chain family. In terms of assembly, in cyanobacteria the RNAP catalytic core is composed of 2 alpha, 1 beta, 1 beta', 1 gamma and 1 omega subunit. When a sigma factor is associated with the core the holoenzyme is formed, which can initiate transcription.

It carries out the reaction RNA(n) + a ribonucleoside 5'-triphosphate = RNA(n+1) + diphosphate. In terms of biological role, DNA-dependent RNA polymerase catalyzes the transcription of DNA into RNA using the four ribonucleoside triphosphates as substrates. This chain is DNA-directed RNA polymerase subunit alpha, found in Prochlorococcus marinus (strain MIT 9301).